Consider the following 95-residue polypeptide: Small ribosomal subunit protein uS19 (95 aa).

A disordered region spans residues 76–95; that stretch reads PTRRFGGHADKKAKKGELKK. The segment covering 82-95 has biased composition (basic and acidic residues); it reads GHADKKAKKGELKK.

It belongs to the universal ribosomal protein uS19 family.

Protein S19 forms a complex with S13 that binds strongly to the 16S ribosomal RNA. This is Small ribosomal subunit protein uS19 from Thermotoga neapolitana (strain ATCC 49049 / DSM 4359 / NBRC 107923 / NS-E).